The primary structure comprises 878 residues: Valine--tRNA ligase (878 aa).

A 'HIGH' region motif is present at residues 43 to 53 (PYPTGRLHLGH). Positions 527-531 (KMSKS) match the 'KMSKS' region motif. Lysine 530 is a binding site for ATP.

Belongs to the class-I aminoacyl-tRNA synthetase family. ValS type 2 subfamily.

It is found in the cytoplasm. It carries out the reaction tRNA(Val) + L-valine + ATP = L-valyl-tRNA(Val) + AMP + diphosphate. Its function is as follows. Catalyzes the attachment of valine to tRNA(Val). As ValRS can inadvertently accommodate and process structurally similar amino acids such as threonine, to avoid such errors, it has a 'posttransfer' editing activity that hydrolyzes mischarged Thr-tRNA(Val) in a tRNA-dependent manner. This is Valine--tRNA ligase from Methanocaldococcus jannaschii (strain ATCC 43067 / DSM 2661 / JAL-1 / JCM 10045 / NBRC 100440) (Methanococcus jannaschii).